We begin with the raw amino-acid sequence, 312 residues long: Porphobilinogen deaminase (312 aa).

At Cys241 the chain carries S-(dipyrrolylmethanemethyl)cysteine.

This sequence belongs to the HMBS family. Monomer. Dipyrromethane serves as cofactor.

The catalysed reaction is 4 porphobilinogen + H2O = hydroxymethylbilane + 4 NH4(+). Its pathway is porphyrin-containing compound metabolism; protoporphyrin-IX biosynthesis; coproporphyrinogen-III from 5-aminolevulinate: step 2/4. In terms of biological role, tetrapolymerization of the monopyrrole PBG into the hydroxymethylbilane pre-uroporphyrinogen in several discrete steps. The chain is Porphobilinogen deaminase from Trichlorobacter lovleyi (strain ATCC BAA-1151 / DSM 17278 / SZ) (Geobacter lovleyi).